The following is a 234-amino-acid chain: MDIKLKDFEGPLDLLLHLVSQYKVDIYEVPIVEVIEQYLNYIETLQVMKLEVAGDYMLMASQLMLIKSRRLLPKVVEHIEEEDLEQDLLEKIEEYSRFKAVSQALAKQHDQRAKWYSKPKQELIFEDAILQEDKTVMDLFLAFSNIMAAKRAVLKNNHTVIERDDYKIEDMMASIKQRLEKENVISLSAIFEECQTLNEVISIFLASLELIKLHVVFVEQLSNFGDIILRKEKR.

This sequence belongs to the ScpA family. Component of a cohesin-like complex composed of ScpA, ScpB and the Smc homodimer, in which ScpA and ScpB bind to the head domain of Smc. The presence of the three proteins is required for the association of the complex with DNA.

It localises to the cytoplasm. In terms of biological role, participates in chromosomal partition during cell division. May act via the formation of a condensin-like complex containing Smc and ScpB that pull DNA away from mid-cell into both cell halves. The sequence is that of Segregation and condensation protein A from Streptococcus pyogenes serotype M5 (strain Manfredo).